A 199-amino-acid chain; its full sequence is Probable chemoreceptor glutamine deamidase CheD (199 aa).

Belongs to the CheD family.

It carries out the reaction L-glutaminyl-[protein] + H2O = L-glutamyl-[protein] + NH4(+). Functionally, probably deamidates glutamine residues to glutamate on methyl-accepting chemotaxis receptors (MCPs), playing an important role in chemotaxis. In Cereibacter sphaeroides (strain ATCC 17029 / ATH 2.4.9) (Rhodobacter sphaeroides), this protein is Probable chemoreceptor glutamine deamidase CheD.